The primary structure comprises 487 residues: Wax ester synthase/diacylglycerol acyltransferase 3 (487 aa).

Over 1-193 (MYTMKKGKDM…KHASSNKKSW (193 aa)) the chain is Cytoplasmic. Residue H151 is the Proton acceptor of the active site. Residues 194–214 (WLVGRFWFMIRIIFTTVVELF) form a helical membrane-spanning segment. At 215 to 487 (KYLLTLCFMR…MEKGVHKMEV (273 aa)) the chain is on the lumenal side.

This sequence in the N-terminal section; belongs to the long-chain O-acyltransferase family. In terms of tissue distribution, mostly expressed in flowers and siliques.

It is found in the cell membrane. The protein localises to the endoplasmic reticulum membrane. It catalyses the reaction an acyl-CoA + a 1,2-diacyl-sn-glycerol = a triacyl-sn-glycerol + CoA. The enzyme catalyses a long chain fatty alcohol + a fatty acyl-CoA = a wax ester + CoA. It functions in the pathway glycerolipid metabolism; triacylglycerol biosynthesis. It participates in lipid metabolism. In terms of biological role, bifunctional wax ester synthase/diacylglycerol acyltransferase. Involved in cuticular wax biosynthesis. This chain is Wax ester synthase/diacylglycerol acyltransferase 3, found in Arabidopsis thaliana (Mouse-ear cress).